Consider the following 249-residue polypeptide: Probable transcriptional regulatory protein LIC_12886 (249 aa).

It belongs to the TACO1 family.

Its subcellular location is the cytoplasm. The protein is Probable transcriptional regulatory protein LIC_12886 of Leptospira interrogans serogroup Icterohaemorrhagiae serovar copenhageni (strain Fiocruz L1-130).